We begin with the raw amino-acid sequence, 465 residues long: Ras GTPase-activating protein-binding protein 1 (465 aa).

The NTF2 domain occupies 11–133; the sequence is VGREFVRQYY…FYVHNDIFRY (123 aa). Glycyl lysine isopeptide (Lys-Gly) (interchain with G-Cter in ubiquitin) cross-links involve residues Lys-36, Lys-50, Lys-59, Lys-64, Lys-76, and Lys-123. Residues 142–224 are acidic disordered region; the sequence is ITEPQEESEE…EPVLEETAPE (83 aa). Position 143 is a phosphothreonine (Thr-143). Acidic residues-rich tracts occupy residues 145–157 and 184–205; these read PQEE…EEPE and EHLE…EQEP. Residues 145–242 are disordered; it reads PQEESEEEVE…APADIAQTVQ (98 aa). Phosphoserine is present on Ser-149. Phosphoserine is present on residues Ser-230, Ser-231, Ser-249, and Ser-252. The segment at 254–326 is disordered; that stretch reads TSKNLPPSGA…PVREAGEQGD (73 aa). Basic and acidic residues-rich tracts occupy residues 296-306 and 317-326; these read PQRDQRVREQR and PVREAGEQGD. One can recognise an RRM domain in the interval 339–414; the sequence is HQLFIGNLPH…VRLNVEEKKT (76 aa). Residues Lys-352 and Lys-356 each participate in a glycyl lysine isopeptide (Lys-Gly) (interchain with G-Cter in ubiquitin) cross-link. A Phosphoserine modification is found at Ser-372. Lys-375 is covalently cross-linked (Glycyl lysine isopeptide (Lys-Gly) (interchain with G-Cter in ubiquitin)). Lys-375 bears the N6-acetyllysine; alternate mark. Residue Lys-375 forms a Glycyl lysine isopeptide (Lys-Gly) (interchain with G-Cter in SUMO2); alternate linkage. Residue Lys-392 forms a Glycyl lysine isopeptide (Lys-Gly) (interchain with G-Cter in ubiquitin); alternate linkage. The tract at residues 409-465 is RG-rich region; it reads VEEKKTRAAREGDRRDNRLRGPGGPRGGLGGGMRGPPRGGMVQKPGFGVGRSIAPRQ. The segment covering 412 to 427 has biased composition (basic and acidic residues); the sequence is KKTRAAREGDRRDNRL. The segment at 412–465 is disordered; that stretch reads KKTRAAREGDRRDNRLRGPGGPRGGLGGGMRGPPRGGMVQKPGFGVGRSIAPRQ. Arg-428 is modified (asymmetric dimethylarginine). A compositionally biased stretch (gly residues) spans 429-446; the sequence is GPGGPRGGLGGGMRGPPR. Arg-434 is modified (asymmetric dimethylarginine; alternate). 4 positions are modified to omega-N-methylarginine; alternate: Arg-434, Arg-446, Arg-459, and Arg-464. Arg-459 carries the dimethylated arginine; alternate modification.

As to quaternary structure, homodimer and oligomer. Component of a TAU mRNP complex, at least composed of IGF2BP1, ELAVL4 and G3BP1. Binds to the SH3 domain of Ras GTPase-activating protein (RASA1) in proliferating cells. No interaction in quiescent cells. Interacts (via NTF2 domain) with USP10; inhibiting stress granule formation by lowering G3BP1 valence. Interacts (via NTF2 domain) with CAPRIN1; promoting stress granule formation by lowering the saturation-concentration of G3BP1. Interacts (via NTF2 domain) with UBAP2L; promoting stress granule formation. Associates (via RG-rich region) with 40S ribosome subunits. Interacts with RPTOR and SPAG5; this complex is increased by oxidative stress. Interacts with ATXN2L. Interacts with STYXL1. Interacts with CGAS (via N-terminus); this interaction promotes the DNA-binding and activation of CGAS. Interacts (via C-terminus) with RIGI. Interacts with PABPC1. Interacts with QKI (isoforms QKI6 and QKI7); directing N(7)-methylguanine-containing mRNAs to stress granules. It depends on Mg(2+) as a cofactor. Post-translationally, phosphorylation of the acidic disordered region regulates stress granule assembly. RASA1-dependent phosphorylation of Ser-149 induces a conformational change that prevents self-association. Dephosphorylation after HRAS activation is required for stress granule assembly. Ser-149 phosphorylation induces partial nuclear localization. In terms of processing, arg-435 is dimethylated, probably to asymmetric dimethylarginine. Ubiquitinated by TRIM21 via 'Lys-63'-linked polyubiquitination in the NTF2 domain in response to heat shock, leading to stress granule disassembly: ubiquitination promotes interaction with the FAF2 adapter, followed by interaction with VCP, which extracts G3BP1 from stress granules, leading to stress granule disassembly. In case of prolonged stress, ubiquitination by TRIM21 leads to autophagy-dependent degradation of G3BP1 via recruitment of ubiquitinated G3BP1 by SQSTM1 and/or CALCOCO2 to autophagosomes.

It is found in the cytoplasm. It localises to the cytosol. Its subcellular location is the perikaryon. The protein localises to the stress granule. The protein resides in the nucleus. The enzyme catalyses ATP + H2O = ADP + phosphate + H(+). With respect to regulation, under physiological conditions, G3BP1 adopts a compact state that is stabilized by intramolecular interactions between the RG-rich and the acidic regions that inhibit phase separation. Upon stress, polysomes disassemble and mRNAs are released in an unfolded protein-free state. Binding of unfolded mRNA to G3BP1 outcompetes the intramolecular interactions and RNA-bound G3BP1 adopts an expanded conformation in which the RG-rich region becomes exposed to engage in protein-protein and protein-RNA interactions, allowing physical cross-linking of RNA molecules to form protein-RNA condensates, leading to liquid-liquid phase separation (LLPS). Functionally, protein involved in various processes, such as stress granule formation and innate immunity. Plays an essential role in stress granule formation. Stress granules are membraneless compartments that store mRNAs and proteins, such as stalled translation pre-initiation complexes, in response to stress. Promotes formation of stress granules phase-separated membraneless compartment by undergoing liquid-liquid phase separation (LLPS) upon unfolded RNA-binding: functions as a molecular switch that triggers RNA-dependent LLPS in response to a rise in intracellular free RNA concentrations. Also acts as an ATP- and magnesium-dependent helicase: unwinds DNA/DNA, RNA/DNA, and RNA/RNA substrates with comparable efficiency. Acts unidirectionally by moving in the 5' to 3' direction along the bound single-stranded DNA. Unwinds preferentially partial DNA and RNA duplexes having a 17 bp annealed portion and either a hanging 3' tail or hanging tails at both 5'- and 3'-ends. Plays an essential role in innate immunity by promoting CGAS and RIGI activity. Participates in the DNA-triggered cGAS/STING pathway by promoting the DNA binding and activation of CGAS. Triggers the condensation of cGAS, a process probably linked to the formation of membrane-less organelles. Also enhances RIGI-induced type I interferon production probably by helping RIGI at sensing pathogenic RNA. May also act as a phosphorylation-dependent sequence-specific endoribonuclease in vitro: Cleaves exclusively between cytosine and adenine and cleaves MYC mRNA preferentially at the 3'-UTR. This chain is Ras GTPase-activating protein-binding protein 1 (G3BP1), found in Bos taurus (Bovine).